Here is a 238-residue protein sequence, read N- to C-terminus: Zinc finger protein ZAT6 (238 aa).

The segment covering 1–15 (MALETLTSPRLSSPM) has biased composition (polar residues). Positions 1–42 (MALETLTSPRLSSPMPTLFQDSALGFHGSKGKRSKRSRSEFD) are disordered. Positions 30-38 (KGKRSKRSR) match the Nuclear localization signal motif. 2 C2H2-type zinc fingers span residues 89 to 111 (YKCS…KASH) and 148 to 170 (HVCS…KRCH). The interval 175–202 (NGGGVSSSVSNSEDVGSTSHVSSGHRGF) is disordered. Residues 180–193 (SSSVSNSEDVGSTS) are compositionally biased toward low complexity.

It is found in the nucleus. Its function is as follows. Probable transcription factor that regulates root development and phosphate (Pi) acquisition and homeostasis. Probably acts as a repressor of primary root growth and regulates Pi homeostasis through the control of root architecture. This chain is Zinc finger protein ZAT6 (ZAT6), found in Arabidopsis thaliana (Mouse-ear cress).